The primary structure comprises 419 residues: Tyrosine--tRNA ligase (419 aa).

L-tyrosine is bound at residue Y34. A 'HIGH' region motif is present at residues 39-48 (PSGDSMHIGH). L-tyrosine is bound by residues Y168 and Q172. The short motif at 230 to 234 (KFGKS) is the 'KMSKS' region element. Residue K233 participates in ATP binding. The S4 RNA-binding domain occupies 352–418 (ANLVDWLVTL…GKKKYFLVSY (67 aa)).

It belongs to the class-I aminoacyl-tRNA synthetase family. TyrS type 1 subfamily. In terms of assembly, homodimer.

It is found in the cytoplasm. The catalysed reaction is tRNA(Tyr) + L-tyrosine + ATP = L-tyrosyl-tRNA(Tyr) + AMP + diphosphate + H(+). Catalyzes the attachment of tyrosine to tRNA(Tyr) in a two-step reaction: tyrosine is first activated by ATP to form Tyr-AMP and then transferred to the acceptor end of tRNA(Tyr). In Listeria monocytogenes serotype 4b (strain CLIP80459), this protein is Tyrosine--tRNA ligase.